A 429-amino-acid chain; its full sequence is Protein ABERRANT PANICLE ORGANIZATION 1 (429 aa).

The segment covering 1–11 (MMNPRRLPPLP) has biased composition (pro residues). The tract at residues 1–21 (MMNPRRLPPLPSSTSSASAAD) is disordered. The region spanning 25–71 (PRVWRRLPQPLVDRVLACLPTPSFLRLRAACRRFYHLLFSSPFLHSH) is the F-box domain. Helical transmembrane passes span 72–92 (LLLS…GHLL) and 112–132 (VAGG…LAFL). 3 Kelch repeats span residues 229-277 (MAFA…ELGG), 284-339 (RVAL…AEGG), and 350-397 (YVVL…GAAG).

As to quaternary structure, part of a putative SCF (ASK/Cullin/F-box) ubiquitin ligase complex. Interacts with FL/APO2. In terms of tissue distribution, expressed in seedlings, roots, leaves, shoot apical meristem (SAM), developing panicles, and, at lower levels, in developing seeds.

Its subcellular location is the membrane. It functions in the pathway protein modification; protein ubiquitination. In terms of biological role, component of SCF(ASK-cullin-F-box) E3 ubiquitin ligase complexes, which may mediate the ubiquitination and subsequent proteasomal degradation of target proteins. Together with FL/APO2, involved in the temporal regulation of meristem identity during both vegetative and reproductive developments in an APO2-dependent manner. Promotes spikelet formation by suppressing the precocious conversion of inflorescence meristems to spikelet meristems, probably via a positive regulation of class-C floral homeotic genes, but not of class-B genes, and through the control of cell proliferation in meristems. Mediates culm development and strength/diameter enhancement at internodes. Required for the regulation of the plastochron, floral organ identity, and floral determinacy. Controls the number of primary rachis branches (PRBs). May trigger the formation of vascular bundle systems which, consequently, promote carbohydrate translocation to panicles. Involved in ozone-induced grain yield regulation. In Oryza sativa subsp. indica (Rice), this protein is Protein ABERRANT PANICLE ORGANIZATION 1.